A 314-amino-acid polypeptide reads, in one-letter code: MSLASGPSSKLLLFSLGMGLVSGSKCPNKCVCQDQEVACIDLHLTEYPADIPLNTRRLYLNNNKITSLPALQLGFLSDLVYLDCQNNRIREVMDYTFIGIFRLIYLDLSSNNLTSISPFSFSVLTNLVRLNISHNPHLLYLDKYVFANTTSLRYLDLRNTGLHIIDHNGFHHLVVLQTLYLSGNPWICNCSFLDFTIHLLVSHMDHPDAQNATCTEPAELKGWPITKVGNPLQYMCITHLDQQDYIFLLLIGFCIFAAGTVAAWLTGVCAVLYQNALRTSSGDDTEDETGSRFANQIFRSNTHLGPIRRFPELI.

Positions 1–23 are cleaved as a signal peptide; it reads MSLASGPSSKLLLFSLGMGLVSG. One can recognise an LRRNT domain in the interval 24 to 53; that stretch reads SKCPNKCVCQDQEVACIDLHLTEYPADIPL. At 24–244 the chain is on the extracellular side; that stretch reads SKCPNKCVCQ…MCITHLDQQD (221 aa). Cystine bridges form between C26–C32 and C30–C39. LRR repeat units lie at residues 54-73, 78-99, 102-123, 126-148, and 151-172; these read NTRR…ALQL, DLVY…TFIG, RLIY…SFSV, NLVR…VFAN, and SLRY…GFHH. Residues N112, N131, and N148 are each glycosylated (N-linked (GlcNAc...) asparagine). The 55-residue stretch at 184–238 folds into the LRRCT domain; that stretch reads NPWICNCSFLDFTIHLLVSHMDHPDAQNATCTEPAELKGWPITKVGNPLQYMCIT. Disulfide bonds link C188-C214 and C190-C236. N-linked (GlcNAc...) asparagine glycosylation is found at N189 and N211. Residues 245-265 form a helical membrane-spanning segment; sequence YIFLLLIGFCIFAAGTVAAWL. The Cytoplasmic segment spans residues 266–314; sequence TGVCAVLYQNALRTSSGDDTEDETGSRFANQIFRSNTHLGPIRRFPELI.

Interacts with KCNMA1. Interacts with KCNU1; this interaction may be required for LRRC52 stability and changes the channel gating properties. In terms of processing, N-glycosylated. As to expression, testis-specific (at protein level). At the mRNA level, also detected in kidney, ventricle, spinal cord and skeletal muscle, although at lower levels compared to testis. Expression in testis at the protein level requires the presence of KCNU1.

It localises to the cell membrane. Auxiliary protein of the large-conductance, voltage and calcium-activated potassium channel (BK alpha). Modulates gating properties by producing a marked shift in the BK channel's voltage dependence of activation in the hyperpolarizing direction, and in the absence of calcium. KCNU1 channel auxiliary protein. Modulates KCNU1 gating properties, shifting KCNU1 gating to more negative potentials at a given pH. This chain is Leucine-rich repeat-containing protein 52 (Lrrc52), found in Mus musculus (Mouse).